Here is a 216-residue protein sequence, read N- to C-terminus: Large ribosomal subunit protein uL4 (216 aa).

The interval 47–77 is disordered; that stretch reads THKVKGMGEVSGTTKKPYRQKGTGNARQGSL.

It belongs to the universal ribosomal protein uL4 family. Part of the 50S ribosomal subunit.

Its function is as follows. One of the primary rRNA binding proteins, this protein initially binds near the 5'-end of the 23S rRNA. It is important during the early stages of 50S assembly. It makes multiple contacts with different domains of the 23S rRNA in the assembled 50S subunit and ribosome. Functionally, forms part of the polypeptide exit tunnel. The polypeptide is Large ribosomal subunit protein uL4 (Acidiphilium cryptum (strain JF-5)).